A 578-amino-acid chain; its full sequence is Proteasome-associated ATPase (578 aa).

A coiled-coil region spans residues 35-84 (RHLTALEEQLGAARTRLAQVSAQNDRLATTLREARDQIVALKAEVDRLGQ). An ATP-binding site is contributed by 266 to 271 (GCGKTL). Residues 577–578 (YL) are docks into pockets in the proteasome alpha-ring.

Belongs to the AAA ATPase family. As to quaternary structure, homohexamer. Assembles into a hexameric ring structure that caps the 20S proteasome core. Strongly interacts with the prokaryotic ubiquitin-like protein Pup through a hydrophobic interface; the interacting region of ARC lies in its N-terminal coiled-coil domain. There is one Pup binding site per ARC hexamer ring. Upon ATP-binding, the C-terminus of ARC interacts with the alpha-rings of the proteasome core, possibly by binding to the intersubunit pockets.

The protein operates within protein degradation; proteasomal Pup-dependent pathway. ATPase which is responsible for recognizing, binding, unfolding and translocation of pupylated proteins into the bacterial 20S proteasome core particle. May be essential for opening the gate of the 20S proteasome via an interaction with its C-terminus, thereby allowing substrate entry and access to the site of proteolysis. Thus, the C-termini of the proteasomal ATPase may function like a 'key in a lock' to induce gate opening and therefore regulate proteolysis. The protein is Proteasome-associated ATPase of Kineococcus radiotolerans (strain ATCC BAA-149 / DSM 14245 / SRS30216).